The sequence spans 796 residues: Endonuclease MutS2 (796 aa).

339–346 (GPNTGGKT) contributes to the ATP binding site. The disordered stretch occupies residues 620–644 (EKLGDTDSSLVSKAKKNRKQHKPSD). A Smr domain is found at 721–796 (LNIIGKRVDE…DHGVTIVEFK (76 aa)).

The protein belongs to the DNA mismatch repair MutS family. MutS2 subfamily. As to quaternary structure, homodimer. Binds to stalled ribosomes, contacting rRNA.

In terms of biological role, endonuclease that is involved in the suppression of homologous recombination and thus may have a key role in the control of bacterial genetic diversity. Acts as a ribosome collision sensor, splitting the ribosome into its 2 subunits. Detects stalled/collided 70S ribosomes which it binds and splits by an ATP-hydrolysis driven conformational change. Acts upstream of the ribosome quality control system (RQC), a ribosome-associated complex that mediates the extraction of incompletely synthesized nascent chains from stalled ribosomes and their subsequent degradation. Probably generates substrates for RQC. The polypeptide is Endonuclease MutS2 (Lachnoclostridium phytofermentans (strain ATCC 700394 / DSM 18823 / ISDg) (Clostridium phytofermentans)).